A 444-amino-acid chain; its full sequence is Chromosome partition protein MukF (444 aa).

The segment at 212-240 (LDETSGNLRELQDTLNAAGDKLQAQLLRI) is leucine-zipper.

The protein belongs to the MukF family. As to quaternary structure, interacts, and probably forms a ternary complex, with MukE and MukB via its C-terminal region. The complex formation is stimulated by calcium or magnesium. It is required for an interaction between MukE and MukB.

The protein resides in the cytoplasm. It localises to the nucleoid. In terms of biological role, involved in chromosome condensation, segregation and cell cycle progression. May participate in facilitating chromosome segregation by condensation DNA from both sides of a centrally located replisome during cell division. Not required for mini-F plasmid partitioning. Probably acts via its interaction with MukB and MukE. Overexpression results in anucleate cells. It has a calcium binding activity. The sequence is that of Chromosome partition protein MukF from Haemophilus influenzae (strain PittGG).